Here is a 431-residue protein sequence, read N- to C-terminus: MERINSINDFNEAKQVIPGGVNSPVRAFRAVGGTPPFIKEAKGSYLVDEDGNRYIDFVQSWGPLLFGHADLDIQKAVEEAIKRGLSFGAPTTSETLLAKEIIALYEGIEKIRFTSSGTEATMSAIRLARGYTGRDDIIKFEGCYHGHSDALLVQAGSGLATFGNPSSPGVPQSFTKHTLLARYNDLESVRECFKKSSGVACVILEPIAGNMGLVPATQEFIQGLRKLCDEQGSVLIFDEVMSGFRASFGGAQALYGVIPDMATFGKVIGGGMPVGAFGGRSDIMACLSPEGAVYQAGTLSGNPVAMAAGIASIRKIKQGGEALFSRLESLALRLMEGFKKCAQKHQIPLQTTVRGSMFGFFFNHAPVSNFEEALQSDTALFAKFHQAMLERGVYLACSQFETGFICASMDESLVDEVIAKIDEALEEIGRG.

Lysine 266 carries the N6-(pyridoxal phosphate)lysine modification.

Belongs to the class-III pyridoxal-phosphate-dependent aminotransferase family. HemL subfamily. As to quaternary structure, homodimer. Requires pyridoxal 5'-phosphate as cofactor.

The protein localises to the cytoplasm. It carries out the reaction (S)-4-amino-5-oxopentanoate = 5-aminolevulinate. Its pathway is porphyrin-containing compound metabolism; protoporphyrin-IX biosynthesis; 5-aminolevulinate from L-glutamyl-tRNA(Glu): step 2/2. In Wolinella succinogenes (strain ATCC 29543 / DSM 1740 / CCUG 13145 / JCM 31913 / LMG 7466 / NCTC 11488 / FDC 602W) (Vibrio succinogenes), this protein is Glutamate-1-semialdehyde 2,1-aminomutase.